The primary structure comprises 269 residues: uncharacterized protein (269 aa).

Residues 12–19 and 130–137 each bind ATP; these read GKGGTGKS and GYLIVGKS.

To M.jannaschii MJ0578.

This is an uncharacterized protein from Methanocaldococcus jannaschii (strain ATCC 43067 / DSM 2661 / JAL-1 / JCM 10045 / NBRC 100440) (Methanococcus jannaschii).